We begin with the raw amino-acid sequence, 140 residues long: Translation initiation factor 2 subunit beta (140 aa).

Belongs to the eIF-2-beta/eIF-5 family. In terms of assembly, heterotrimer composed of an alpha, a beta and a gamma chain.

Its function is as follows. eIF-2 functions in the early steps of protein synthesis by forming a ternary complex with GTP and initiator tRNA. The sequence is that of Translation initiation factor 2 subunit beta from Pyrococcus furiosus (strain ATCC 43587 / DSM 3638 / JCM 8422 / Vc1).